The chain runs to 898 residues: Histone-lysine N-methyltransferase mes-4 (898 aa).

The interval 1–68 (MLPSSGDSSK…APILTNAPKD (68 aa)) is disordered. The span at 36 to 51 (QRNATPQGAGSETSSN) shows a compositional bias: polar residues. 2 PHD-type zinc fingers span residues 126 to 214 (DSKC…CNLD) and 303 to 355 (IKAC…CVCG). The SET domain maps to 537–665 (EKIKLAATLC…DGDEITFSYN (129 aa)). One can recognise a Post-SET domain in the interval 671–687 (NLPDCECGAENCMGTMG). Positions 689 to 847 (AKREKPEVAD…SLQTIQETGK (159 aa)) are disordered. The segment covering 692–704 (EKPEVADSSEKAA) has biased composition (basic and acidic residues). Over residues 705-719 (KKNKSSKKKSVKNQN) the composition is skewed to basic residues. Low complexity-rich tracts occupy residues 737 to 751 (ISPSKPSTSSASSTS) and 761 to 773 (SQNKKNLKKNSNQ). Positions 774–788 (PVADTGSTLSTSTEL) are enriched in polar residues. Low complexity predominate over residues 802–811 (SSRSRAASSS).

The protein belongs to the class V-like SAM-binding methyltransferase superfamily. Histone-lysine methyltransferase family. SET2 subfamily. In adults, it is predominantly expressed in the germline, and weakly expressed in intestinal cells.

Its subcellular location is the nucleus. The protein resides in the chromosome. It carries out the reaction L-lysyl(36)-[histone H3] + 2 S-adenosyl-L-methionine = N(6),N(6)-dimethyl-L-lysyl(36)-[histone H3] + 2 S-adenosyl-L-homocysteine + 2 H(+). Its function is as follows. Histone methyltransferase. Dimethylates 'Lys-36' of histone H3, a specific tag for epigenetic transcriptional activation. Plays a central role in early development and is responsible for all H3 'Lys-36' dimethylation until about the 40-cell stage. Indirectly involved in the global inactivation of the X chromosomes in germline cells, possibly by excluding the mes-2-mes-3-mes-6 repressive Polycomb complex from the autosomes. Not related to transcription elongation. Required for small-RNA-induced H3K27 trimethylation. May suppress sensitivity to RNAi. May regulate the expression of genes required for vulval development. This is Histone-lysine N-methyltransferase mes-4 from Caenorhabditis elegans.